We begin with the raw amino-acid sequence, 377 residues long: MPDTPTLTLAKDLLSRQSVTPEDAGCQELMIKRLKALGFTIEIMVFEDTTNFWARRGTEAPLFTFAGHTDVVPTGSLTQWNTDPFEPTIIDGMLYARGAADMKGSLACMIVAVERFISEHPEHKGSLSFLITSDEEGPFINGTTRVVDTLKERNEIIDMCIVGEPSSTQYVGDVVKNGRRGSLTGNLTVKGIQGHVAYPHIARNPIHQSMAALLELTMTEWDLGNAYFPPTSFQIPNMNSGTGASNVIPGTAEIMFNFRFSTESTVEGLQQRVIELLDKHNLEYDLDWIINGLPFLTDTGDLLTAVVDAVATVNQQKPELLTTGGTSDGRFIAQMGSQVIELGPVNATIHKVNECVKVDDLEKLTDMYQEVLNNLLA.

H68 serves as a coordination point for Zn(2+). D70 is an active-site residue. Residue D101 participates in Zn(2+) binding. E135 functions as the Proton acceptor in the catalytic mechanism. Residues E136, E164, and H350 each contribute to the Zn(2+) site.

This sequence belongs to the peptidase M20A family. DapE subfamily. As to quaternary structure, homodimer. Zn(2+) is required as a cofactor. Requires Co(2+) as cofactor.

The enzyme catalyses N-succinyl-(2S,6S)-2,6-diaminopimelate + H2O = (2S,6S)-2,6-diaminopimelate + succinate. Its pathway is amino-acid biosynthesis; L-lysine biosynthesis via DAP pathway; LL-2,6-diaminopimelate from (S)-tetrahydrodipicolinate (succinylase route): step 3/3. Catalyzes the hydrolysis of N-succinyl-L,L-diaminopimelic acid (SDAP), forming succinate and LL-2,6-diaminopimelate (DAP), an intermediate involved in the bacterial biosynthesis of lysine and meso-diaminopimelic acid, an essential component of bacterial cell walls. The sequence is that of Succinyl-diaminopimelate desuccinylase from Aliivibrio salmonicida (strain LFI1238) (Vibrio salmonicida (strain LFI1238)).